Here is a 231-residue protein sequence, read N- to C-terminus: NADH-ubiquinone oxidoreductase chain 4 (231 aa).

6 helical membrane-spanning segments follow: residues 1–21 (PIAG…YGII), 34–54 (MFLP…LTCL), 63–85 (IAYS…TPWG), 89–111 (AMTL…NTTY), 128–148 (ILPM…AIPP), and 156–176 (LLIM…LGLS).

Belongs to the complex I subunit 4 family.

It is found in the mitochondrion membrane. It catalyses the reaction a ubiquinone + NADH + 5 H(+)(in) = a ubiquinol + NAD(+) + 4 H(+)(out). Core subunit of the mitochondrial membrane respiratory chain NADH dehydrogenase (Complex I) that is believed to belong to the minimal assembly required for catalysis. Complex I functions in the transfer of electrons from NADH to the respiratory chain. The immediate electron acceptor for the enzyme is believed to be ubiquinone. The chain is NADH-ubiquinone oxidoreductase chain 4 (MT-ND4) from Gloydius intermedius (Central Asian pit viper).